Reading from the N-terminus, the 338-residue chain is Ketol-acid reductoisomerase (NADP(+)) (338 aa).

The 181-residue stretch at 1–181 folds into the KARI N-terminal Rossmann domain; it reads MQIFYDKDCD…GGGRTGIIET (181 aa). NADP(+) is bound by residues 24 to 27, arginine 47, serine 50, serine 52, and 82 to 85; these read YGSQ and DEFQ. Histidine 107 is a catalytic residue. NADP(+) is bound at residue glycine 133. Residues 182-327 enclose the KARI C-terminal knotted domain; sequence SFREETETDL…SKLRAMMPWI (146 aa). Positions 190, 194, 226, and 230 each coordinate Mg(2+). Residue serine 251 coordinates substrate.

It belongs to the ketol-acid reductoisomerase family. The cofactor is Mg(2+).

It catalyses the reaction (2R)-2,3-dihydroxy-3-methylbutanoate + NADP(+) = (2S)-2-acetolactate + NADPH + H(+). It carries out the reaction (2R,3R)-2,3-dihydroxy-3-methylpentanoate + NADP(+) = (S)-2-ethyl-2-hydroxy-3-oxobutanoate + NADPH + H(+). It participates in amino-acid biosynthesis; L-isoleucine biosynthesis; L-isoleucine from 2-oxobutanoate: step 2/4. The protein operates within amino-acid biosynthesis; L-valine biosynthesis; L-valine from pyruvate: step 2/4. Involved in the biosynthesis of branched-chain amino acids (BCAA). Catalyzes an alkyl-migration followed by a ketol-acid reduction of (S)-2-acetolactate (S2AL) to yield (R)-2,3-dihydroxy-isovalerate. In the isomerase reaction, S2AL is rearranged via a Mg-dependent methyl migration to produce 3-hydroxy-3-methyl-2-ketobutyrate (HMKB). In the reductase reaction, this 2-ketoacid undergoes a metal-dependent reduction by NADPH to yield (R)-2,3-dihydroxy-isovalerate. In Acinetobacter baylyi (strain ATCC 33305 / BD413 / ADP1), this protein is Ketol-acid reductoisomerase (NADP(+)).